Consider the following 90-residue polypeptide: Small ribosomal subunit protein uS17m (90 aa).

The protein belongs to the universal ribosomal protein uS17 family. In terms of assembly, component of the mitochondrial small ribosomal subunit (mt-SSU). Mature yeast 74S mitochondrial ribosomes consist of a small (37S) and a large (54S) subunit. The 37S small subunit contains a 15S ribosomal RNA (15S mt-rRNA) and at least 32 different proteins. The 54S large subunit contains a 21S rRNA (21S mt-rRNA) and at least 45 different proteins.

It localises to the mitochondrion. In terms of biological role, component of the mitochondrial ribosome (mitoribosome), a dedicated translation machinery responsible for the synthesis of mitochondrial genome-encoded proteins, including at least some of the essential transmembrane subunits of the mitochondrial respiratory chain. The mitoribosomes are attached to the mitochondrial inner membrane and translation products are cotranslationally integrated into the membrane. uS17m may have a meiosis-specific role as it accumulates during the middle stage of sporulation. The polypeptide is Small ribosomal subunit protein uS17m (Schizosaccharomyces pombe (strain 972 / ATCC 24843) (Fission yeast)).